Reading from the N-terminus, the 1917-residue chain is Diacylglycerol kinase eta (1917 aa).

A compositionally biased stretch (basic and acidic residues) spans 1–10 (MSHLKLDTLH). The segment at 1-37 (MSHLKLDTLHVQRSPRGSRRSSRSSGRSSACSSGSIS) is disordered. The span at 23 to 37 (RSSGRSSACSSGSIS) shows a compositional bias: low complexity. Residues 82–175 (AIIKEGFLLK…WLGSLKTATA (94 aa)) enclose the PH domain. 2 Phorbol-ester/DAG-type zinc fingers span residues 195 to 245 (HHHW…IANC) and 268 to 319 (PHQW…AVAC). The region spanning 350–486 (GNFSPLLVFV…DRWSIMVFEK (137 aa)) is the DAGKc domain. Disordered stretches follow at residues 1015–1053 (TTLC…PPRI), 1114–1149 (LEQQ…SEDE), and 1380–1399 (KDKD…EETN). A compositionally biased stretch (polar residues) spans 1128 to 1145 (PEQQQTPTNKGPNSLATT). One can recognise an SAM domain in the interval 1854–1917 (WSVNEVVTWL…LQAIKDLSEN (64 aa)).

The protein belongs to the eukaryotic diacylglycerol kinase family.

Its subcellular location is the cytoplasm. The catalysed reaction is a 1,2-diacyl-sn-glycerol + ATP = a 1,2-diacyl-sn-glycero-3-phosphate + ADP + H(+). Functionally, phosphorylates diacylglycerol (DAG) to generate phosphatidic acid (PA). The polypeptide is Diacylglycerol kinase eta (Drosophila yakuba (Fruit fly)).